Reading from the N-terminus, the 105-residue chain is Nucleoid-associated protein Dred_0043 (105 aa).

The protein belongs to the YbaB/EbfC family. As to quaternary structure, homodimer.

Its subcellular location is the cytoplasm. The protein resides in the nucleoid. In terms of biological role, binds to DNA and alters its conformation. May be involved in regulation of gene expression, nucleoid organization and DNA protection. This chain is Nucleoid-associated protein Dred_0043, found in Desulforamulus reducens (strain ATCC BAA-1160 / DSM 100696 / MI-1) (Desulfotomaculum reducens).